Reading from the N-terminus, the 251-residue chain is PF03932 family protein CutC (251 aa).

It belongs to the CutC family.

Its subcellular location is the cytoplasm. The sequence is that of PF03932 family protein CutC from Edwardsiella ictaluri (strain 93-146).